We begin with the raw amino-acid sequence, 173 residues long: Shikimate kinase (173 aa).

10–15 (GSGKTT) contacts ATP. T14 contacts Mg(2+). Substrate-binding residues include D32, R56, and G78. An ATP-binding site is contributed by R117. Residue R135 participates in substrate binding.

The protein belongs to the shikimate kinase family. Monomer. It depends on Mg(2+) as a cofactor.

Its subcellular location is the cytoplasm. It carries out the reaction shikimate + ATP = 3-phosphoshikimate + ADP + H(+). It participates in metabolic intermediate biosynthesis; chorismate biosynthesis; chorismate from D-erythrose 4-phosphate and phosphoenolpyruvate: step 5/7. Catalyzes the specific phosphorylation of the 3-hydroxyl group of shikimic acid using ATP as a cosubstrate. The protein is Shikimate kinase of Limosilactobacillus fermentum (strain NBRC 3956 / LMG 18251) (Lactobacillus fermentum).